A 236-amino-acid polypeptide reads, in one-letter code: 7-cyano-7-deazaguanine synthase (236 aa).

Position 7 to 17 (7 to 17) interacts with ATP; sequence CSGGLDSVSLA. Zn(2+) contacts are provided by cysteine 185, cysteine 193, cysteine 196, and cysteine 199.

The protein belongs to the QueC family. Requires Zn(2+) as cofactor.

The enzyme catalyses 7-carboxy-7-deazaguanine + NH4(+) + ATP = 7-cyano-7-deazaguanine + ADP + phosphate + H2O + H(+). It functions in the pathway purine metabolism; 7-cyano-7-deazaguanine biosynthesis. Its function is as follows. Catalyzes the ATP-dependent conversion of 7-carboxy-7-deazaguanine (CDG) to 7-cyano-7-deazaguanine (preQ(0)). This is 7-cyano-7-deazaguanine synthase from Agrobacterium fabrum (strain C58 / ATCC 33970) (Agrobacterium tumefaciens (strain C58)).